The sequence spans 358 residues: Phospho-N-acetylmuramoyl-pentapeptide-transferase (358 aa).

10 consecutive transmembrane segments (helical) span residues 27–47 (LFNN…SLFA), 81–101 (MGGV…TINL), 106–126 (LFLL…DDYL), 147–167 (VISI…PLVI), 171–191 (SWVI…LVGI), 201–221 (LDGL…TEIL), 228–248 (LFVF…FLKY), 255–275 (IFMG…IALL), 278–298 (SVFT…SVII), and 336–356 (IVEN…VLKI).

It belongs to the glycosyltransferase 4 family. MraY subfamily. Mg(2+) is required as a cofactor.

Its subcellular location is the cell inner membrane. The enzyme catalyses UDP-N-acetyl-alpha-D-muramoyl-L-alanyl-gamma-D-glutamyl-meso-2,6-diaminopimeloyl-D-alanyl-D-alanine + di-trans,octa-cis-undecaprenyl phosphate = di-trans,octa-cis-undecaprenyl diphospho-N-acetyl-alpha-D-muramoyl-L-alanyl-D-glutamyl-meso-2,6-diaminopimeloyl-D-alanyl-D-alanine + UMP. It functions in the pathway cell wall biogenesis; peptidoglycan biosynthesis. Catalyzes the initial step of the lipid cycle reactions in the biosynthesis of the cell wall peptidoglycan: transfers peptidoglycan precursor phospho-MurNAc-pentapeptide from UDP-MurNAc-pentapeptide onto the lipid carrier undecaprenyl phosphate, yielding undecaprenyl-pyrophosphoryl-MurNAc-pentapeptide, known as lipid I. This is Phospho-N-acetylmuramoyl-pentapeptide-transferase from Prochlorococcus marinus (strain MIT 9215).